Reading from the N-terminus, the 516-residue chain is Delta(24)-sterol reductase (516 aa).

Residues 1–22 (MEPAVSLAVCALLFLLWVRVKG) form the signal peptide. At 23–31 (LEFVLIHQR) the chain is on the lumenal side. The helical transmembrane segment at 32 to 52 (WVFVCLFLLPLSLIFDIYYYV) threads the bilayer. Residues 53–516 (RAWVVFKLSS…YDKICKAARH (464 aa)) are Cytoplasmic-facing. The 177-residue stretch at 58 to 234 (FKLSSAPRLH…VAAEIRIIPA (177 aa)) folds into the FAD-binding PCMH-type domain. Position 163–175 (163–175 (TVGGLIMGTGIES)) interacts with FAD.

This sequence belongs to the FAD-binding oxidoreductase/transferase type 4 family. The cofactor is FAD.

Its subcellular location is the endoplasmic reticulum membrane. The protein resides in the golgi apparatus membrane. It carries out the reaction 5alpha-cholest-8-en-3beta-ol + NADP(+) = zymosterol + NADPH + H(+). It catalyses the reaction cholesterol + NADP(+) = desmosterol + NADPH + H(+). The enzyme catalyses lanosterol + NADPH + H(+) = 24,25-dihydrolanosterol + NADP(+). It participates in steroid biosynthesis; cholesterol biosynthesis. Its function is as follows. Catalyzes the reduction of the delta-24 double bond of sterol intermediates during cholesterol biosynthesis. In addition to its cholesterol-synthesizing activity, can protect cells from oxidative stress by reducing caspase 3 activity during apoptosis induced by oxidative stress. Also protects against amyloid-beta peptide-induced apoptosis. The sequence is that of Delta(24)-sterol reductase (Dhcr24) from Mus musculus (Mouse).